We begin with the raw amino-acid sequence, 132 residues long: Small ribosomal subunit protein uS8 (132 aa).

It belongs to the universal ribosomal protein uS8 family. In terms of assembly, part of the 30S ribosomal subunit. Contacts proteins S5 and S12.

Its function is as follows. One of the primary rRNA binding proteins, it binds directly to 16S rRNA central domain where it helps coordinate assembly of the platform of the 30S subunit. This is Small ribosomal subunit protein uS8 from Anaplasma marginale (strain Florida).